A 241-amino-acid chain; its full sequence is Interleukin-6 (241 aa).

Residues 1–26 (MNSFTSALRPGPLGCSLALLLVVATA) form the signal peptide. Residues 32–51 (PVREDSNTKASPDKTLTPPG) form a disordered region. 2 disulfides stabilise this stretch: Cys72/Cys78 and Cys101/Cys111. An N-linked (GlcNAc...) asparagine glycan is attached at Asn108.

The protein belongs to the IL-6 superfamily. As to quaternary structure, component of a hexamer of two molecules each of IL6, IL6R and IL6ST; first binds to IL6R to associate with the signaling subunit IL6ST. Interacts with IL6R (via the N-terminal ectodomain); this interaction may be affected by IL6R-binding with SORL1, hence decreasing IL6 cis signaling. Interacts with SORL1 (via the N-terminal ectodomain); this interaction leads to IL6 internalization and lysosomal degradation. May form a trimeric complex with the soluble SORL1 ectodomain and soluble IL6R receptor; this interaction might stabilize circulating IL6, hence promoting IL6 trans signaling.

It localises to the secreted. Cytokine with a wide variety of biological functions in immunity, tissue regeneration, and metabolism. Binds to IL6R, then the complex associates to the signaling subunit IL6ST/gp130 to trigger the intracellular IL6-signaling pathway. The interaction with the membrane-bound IL6R and IL6ST stimulates 'classic signaling', whereas the binding of IL6 and soluble IL6R to IL6ST stimulates 'trans-signaling'. Alternatively, 'cluster signaling' occurs when membrane-bound IL6:IL6R complexes on transmitter cells activate IL6ST receptors on neighboring receiver cells. Its function is as follows. IL6 is a potent inducer of the acute phase response. Rapid production of IL6 contributes to host defense during infection and tissue injury, but excessive IL6 synthesis is involved in disease pathology. In the innate immune response, is synthesized by myeloid cells, such as macrophages and dendritic cells, upon recognition of pathogens through toll-like receptors (TLRs) at the site of infection or tissue injury. In the adaptive immune response, is required for the differentiation of B cells into immunoglobulin-secreting cells. Plays a major role in the differentiation of CD4(+) T cell subsets. Essential factor for the development of T follicular helper (Tfh) cells that are required for the induction of germinal-center formation. Required to drive naive CD4(+) T cells to the Th17 lineage. Also required for proliferation of myeloma cells and the survival of plasmablast cells. Functionally, acts as an essential factor in bone homeostasis and on vessels directly or indirectly by induction of VEGF, resulting in increased angiogenesis activity and vascular permeability. Induces, through 'trans-signaling' and synergistically with IL1B and TNF, the production of VEGF. Involved in metabolic controls, is discharged into the bloodstream after muscle contraction increasing lipolysis and improving insulin resistance. 'Trans-signaling' in central nervous system also regulates energy and glucose homeostasis. Mediates, through GLP-1, crosstalk between insulin-sensitive tissues, intestinal L cells and pancreatic islets to adapt to changes in insulin demand. Also acts as a myokine. Plays a protective role during liver injury, being required for maintenance of tissue regeneration. Also has a pivotal role in iron metabolism by regulating HAMP/hepcidin expression upon inflammation or bacterial infection. Through activation of IL6ST-YAP-NOTCH pathway, induces inflammation-induced epithelial regeneration. This Oryctolagus cuniculus (Rabbit) protein is Interleukin-6 (IL6).